Reading from the N-terminus, the 711-residue chain is DNA topoisomerase 3 (711 aa).

Residues 2-135 enclose the Toprim domain; the sequence is KSLILAEKPS…IRRLWISSVT (134 aa). 2 residues coordinate Mg(2+): Glu-8 and Asp-104. A Topo IA-type catalytic domain is found at 152–580; that stretch reads YNDLYYAALA…EMKDFTKDVV (429 aa). The segment at 186–191 is interaction with DNA; that stretch reads SLGRVQ. Tyr-305 (O-(5'-phospho-DNA)-tyrosine intermediate) is an active-site residue. The interval 691 to 711 is disordered; it reads MNKNEGLDNNPFKDALKNLNL.

Belongs to the type IA topoisomerase family. Mg(2+) serves as cofactor.

The catalysed reaction is ATP-independent breakage of single-stranded DNA, followed by passage and rejoining.. In terms of biological role, releases the supercoiling and torsional tension of DNA, which is introduced during the DNA replication and transcription, by transiently cleaving and rejoining one strand of the DNA duplex. Introduces a single-strand break via transesterification at a target site in duplex DNA. The scissile phosphodiester is attacked by the catalytic tyrosine of the enzyme, resulting in the formation of a DNA-(5'-phosphotyrosyl)-enzyme intermediate and the expulsion of a 3'-OH DNA strand. The free DNA strand then undergoes passage around the unbroken strand, thus removing DNA supercoils. Finally, in the religation step, the DNA 3'-OH attacks the covalent intermediate to expel the active-site tyrosine and restore the DNA phosphodiester backbone. This Staphylococcus aureus (strain Mu50 / ATCC 700699) protein is DNA topoisomerase 3.